The following is a 414-amino-acid chain: Histidine--tRNA ligase (414 aa).

This sequence belongs to the class-II aminoacyl-tRNA synthetase family. In terms of assembly, homodimer.

Its subcellular location is the cytoplasm. The enzyme catalyses tRNA(His) + L-histidine + ATP = L-histidyl-tRNA(His) + AMP + diphosphate + H(+). This Mycoplasma capricolum subsp. capricolum (strain California kid / ATCC 27343 / NCTC 10154) protein is Histidine--tRNA ligase.